The chain runs to 1067 residues: [F-actin]-monooxygenase MICAL1 (1067 aa).

The interval 1–489 (MASPTSTNPA…RDLYDVLAKE (489 aa)) is monooxygenase domain. Residues Cys95, 114–116 (EKR), 121–123 (RHN), Phe181, Tyr293, and Asp393 each bind FAD. Thr475 is modified (phosphothreonine). In terms of domain architecture, Calponin-homology (CH) spans 508 to 612 (AGTQEELLRW…YLSHFHSAFK (105 aa)). Phosphoserine is present on Ser617. The tract at residues 645-688 (SRAKENAEDAGGKKLRLEMEAETPSTEVPPDPEPGVPLTPPSQH) is disordered. Residues 646-663 (RAKENAEDAGGKKLRLEM) show a composition bias toward basic and acidic residues. Residues 646–666 (RAKENAEDAGGKKLRLEMEAE) adopt a coiled-coil conformation. Over residues 671-684 (EVPPDPEPGVPLTP) the composition is skewed to pro residues. Residues 695–757 (DLCALCGEHL…LQHLPQTDHK (63 aa)) form the LIM zinc-binding domain. Cys697, Cys700, His718, Cys721, Cys724, Cys727, Cys747, and His750 together coordinate Zn(2+). The span at 755–766 (DHKAEGSDRGPE) shows a compositional bias: basic and acidic residues. Disordered regions lie at residues 755–838 (DHKA…RSCS) and 867–886 (KEEK…VPLD). The segment covering 773 to 789 (PSENSMPPGLSTPTASQ) has biased composition (polar residues). Phosphoserine occurs at positions 872, 875, and 876. The segment covering 876-886 (SEEEEEDVPLD) has biased composition (acidic residues). The tract at residues 901–1067 (GTMNNYPTWR…ELALGTGAQG (167 aa)) is important for interaction with RAB8A. Positions 918 to 1067 (KEEEMKRFCK…ELALGTGAQG (150 aa)) constitute a bMERB domain. 2 coiled-coil regions span residues 919–962 (EEEM…QSSS) and 999–1027 (NLEE…AADR). Phosphoserine is present on Ser1057.

Belongs to the Mical family. In terms of assembly, interacts with STK38 and STK38L. Interacts with RAB1B, RAB8A, RAB10, RAB13, RAB15 and RAB35 (in their GTP-bound forms); binding to RAB1B is of low affinity compared to other Rab proteins; at least in case of RAB8A and RAB10 can bind 2 molecules of the Rab proteins simultaneously; ternary complex formation of RAB8A, RAB13 and MICAL1 is possible. Associates with the SH3 domain of NEDD9. Interacts with VIM and PLXNA3. Interacts with GRAF1/ARHGAP26, GRAF2/ARHGAP10, RAB8A, RAB8B and RAB10; may bind simultaneously to GRAFs and Rabs and connects GRAFs to Rabs. Does not interact with RAB1 and RAB11A. The cofactor is FAD. Expressed in the thymus, lung, spleen, kidney, testis and hematopoietic cells.

It is found in the cytoplasm. The protein localises to the cytoskeleton. It localises to the endosome membrane. Its subcellular location is the midbody. The catalysed reaction is L-methionyl-[F-actin] + NADPH + O2 + H(+) = L-methionyl-(R)-S-oxide-[F-actin] + NADP(+) + H2O. It catalyses the reaction NADPH + O2 + H(+) = H2O2 + NADP(+). Monooxygenase that promotes depolymerization of F-actin by mediating oxidation of specific methionine residues on actin to form methionine-sulfoxide, resulting in actin filament disassembly and preventing repolymerization. In the absence of actin, it also functions as a NADPH oxidase producing H(2)O(2). Acts as a cytoskeletal regulator that connects NEDD9 to intermediate filaments. Also acts as a negative regulator of apoptosis via its interaction with STK38 and STK38L; acts by antagonizing STK38 and STK38L activation by MST1/STK4. Involved in regulation of lamina-specific connectivity in the nervous system such as the development of lamina-restricted hippocampal connections. Through redox regulation of the actin cytoskeleton controls the intracellular distribution of secretory vesicles containing L1/neurofascin/NgCAM family proteins in neurons, thereby regulating their cell surface levels. May act as Rab effector protein and play a role in vesicle trafficking. Promotes endosomal tubule extension by associating with RAB8 (RAB8A or RAB8B), RAB10 and GRAF (GRAF1/ARHGAP26 or GRAF2/ARHGAP10) on the endosomal membrane which may connect GRAFs to Rabs, thereby participating in neosynthesized Rab8-Rab10-Rab11-dependent protein export. This Homo sapiens (Human) protein is [F-actin]-monooxygenase MICAL1 (MICAL1).